The chain runs to 105 residues: Cell division protein FtsB (105 aa).

At 1–3 the chain is on the cytoplasmic side; it reads MGK. The chain crosses the membrane as a helical span at residues 4–21; sequence LTLLLLVLLGWLQYSLWL. Residues 22 to 105 lie on the Periplasmic side of the membrane; it reads GKNGVHDLVR…PAAPATQDNQ (84 aa). Positions 28 to 62 form a coiled coil; sequence DLVRVESDVAAQQSNNAQLKARNDQLFAEIDDLNG.

It belongs to the FtsB family. Part of a complex composed of FtsB, FtsL and FtsQ.

Its subcellular location is the cell inner membrane. Its function is as follows. Essential cell division protein. May link together the upstream cell division proteins, which are predominantly cytoplasmic, with the downstream cell division proteins, which are predominantly periplasmic. In Sodalis glossinidius (strain morsitans), this protein is Cell division protein FtsB.